A 167-amino-acid chain; its full sequence is Putative peroxiredoxin-B (167 aa).

The Thioredoxin domain occupies 4–167 (IKRGDRFPTT…STAQKIIAKL (164 aa)). Cysteine 53 functions as the Cysteine sulfenic acid (-SOH) intermediate in the catalytic mechanism. The Microbody targeting signal signature appears at 165 to 167 (AKL).

The protein belongs to the peroxiredoxin family. Prx5 subfamily.

It is found in the peroxisome membrane. It carries out the reaction a hydroperoxide + [thioredoxin]-dithiol = an alcohol + [thioredoxin]-disulfide + H2O. Functionally, thiol-specific peroxidase that catalyzes the reduction of hydrogen peroxide and organic hydroperoxides to water and alcohols, respectively. Plays a role in cell protection against oxidative stress by detoxifying peroxides and as sensor of hydrogen peroxide-mediated signaling events. In Candida boidinii (Yeast), this protein is Putative peroxiredoxin-B (PMPB).